Reading from the N-terminus, the 513-residue chain is 2,3-bisphosphoglycerate-independent phosphoglycerate mutase (513 aa).

Mn(2+)-binding residues include Asp-12 and Ser-62. Ser-62 serves as the catalytic Phosphoserine intermediate. Residues His-123, 153 to 154, Arg-185, Arg-191, 260 to 263, and Lys-333 contribute to the substrate site; these read RD and RPDR. 5 residues coordinate Mn(2+): Asp-400, His-404, Asp-441, His-442, and His-460.

The protein belongs to the BPG-independent phosphoglycerate mutase family. As to quaternary structure, monomer. Requires Mn(2+) as cofactor.

The enzyme catalyses (2R)-2-phosphoglycerate = (2R)-3-phosphoglycerate. The protein operates within carbohydrate degradation; glycolysis; pyruvate from D-glyceraldehyde 3-phosphate: step 3/5. Its function is as follows. Catalyzes the interconversion of 2-phosphoglycerate and 3-phosphoglycerate. The protein is 2,3-bisphosphoglycerate-independent phosphoglycerate mutase of Clostridium tetani (strain Massachusetts / E88).